A 575-amino-acid chain; its full sequence is Sulfite reductase [NADPH] hemoprotein beta-component (575 aa).

Cys-439, Cys-445, Cys-484, and Cys-488 together coordinate [4Fe-4S] cluster. Cys-488 contributes to the siroheme binding site.

Belongs to the nitrite and sulfite reductase 4Fe-4S domain family. As to quaternary structure, alpha(8)-beta(8). The alpha component is a flavoprotein, the beta component is a hemoprotein. The cofactor is siroheme. Requires [4Fe-4S] cluster as cofactor.

The enzyme catalyses hydrogen sulfide + 3 NADP(+) + 3 H2O = sulfite + 3 NADPH + 4 H(+). It participates in sulfur metabolism; hydrogen sulfide biosynthesis; hydrogen sulfide from sulfite (NADPH route): step 1/1. Functionally, component of the sulfite reductase complex that catalyzes the 6-electron reduction of sulfite to sulfide. This is one of several activities required for the biosynthesis of L-cysteine from sulfate. The sequence is that of Sulfite reductase [NADPH] hemoprotein beta-component from Blochmanniella pennsylvanica (strain BPEN).